Consider the following 664-residue polypeptide: Intraflagellar transport protein 70A1 (664 aa).

TPR repeat units lie at residues 11–44 (DGEF…SSRS), 45–78 (RAGL…HPEL), 153–186 (PDGL…SGYQ), 188–220 (DLSY…GIRQ), 393–423 (TKQV…EKYI), 424–456 (PVLM…CNDH), and 458–491 (VWKL…NYDN). The stretch at 507–534 (YIMTSQNEEAEELMRKIEKEEEQLSYGD) forms a coiled coil. One copy of the TPR 8 repeat lies at 543-576 (CIVNLVIGTLYCAKGNYDFGISRVIKSLEPYHKK).

The protein belongs to the TTC30/dfy-1/fleer family. In terms of assembly, interacts wit the IFT B complex component IFT52.

Its subcellular location is the cell projection. It is found in the cilium. Required for polyglutamylation of axonemal tubulin. Plays a role in anterograde intraflagellar transport (IFT), the process by which cilia precursors are transported from the base of the cilium to the site of their incorporation at the tip. The polypeptide is Intraflagellar transport protein 70A1 (Ift70a1) (Mus musculus (Mouse)).